The chain runs to 132 residues: uncharacterized protein (132 aa).

This is an uncharacterized protein from Homo sapiens (Human).